Consider the following 228-residue polypeptide: Response regulator SaeR (228 aa).

One can recognise a Response regulatory domain in the interval 3 to 116 (HLLIVDDEQD…ELVLRINNLL (114 aa)). D51 is modified (4-aspartylphosphate). Residues 127-226 (VEQLSFDELT…VWGLGYKFER (100 aa)) constitute a DNA-binding region (ompR/PhoB-type).

Phosphorylated by SaeS.

The protein resides in the cytoplasm. Its function is as follows. Member of the two-component regulatory system SaeR/SaeS involved in the regulation of staphylococcal virulence factors in a strain-dependent fashion. Probably functions as a transcriptional regulator via a specific DNA-binding domain, recognizing motifs near the promoter sequences of target genes. This is Response regulator SaeR (saeR) from Staphylococcus aureus (strain USA300).